The primary structure comprises 990 residues: Protein SUPPRESSOR OF MAX2 1 (990 aa).

One can recognise a Clp R domain in the interval 8–167 (IQQTLTPEAA…KATIEQSLNN (160 aa)). Repeat stretches follow at residues 12–83 (LTPE…LERL) and 96–167 (ISNA…SLNN). Positions 818 to 855 (PKKEHGSGLSFDLNQAADTDDGSHNTSDLTTDNDQDEQ) are disordered. The short motif at 828–832 (FDLNQ) is the EAR element.

Belongs to the ClpA/ClpB family. In terms of assembly, interacts probably with TPL/TPR in an EAR-motif dependent manner. Interacts with TPL, TPR1, TPR2 and TPR4. As to expression, highly expressed in dry seeds. Expressed in seedlings, rosette leaves and senescing leaves. Detected in roots and axillary shoots. Expressed in the primary rosette buds and expanding leaves of adult rosettes, the vasculature of the hypocotyls, cotyledons, and mature roots, in the midvein and petioles of young leaves, the young leaf periphery, stomata, and the root caps.

Probable component of a transcriptional corepressor complex that acts downstream of MAX2 to negatively regulate karrikins/strigolactone responses. Probable target of MAX2 during germination and seedling photomorphogenesis. Acts probably specifically in the karrikin pathway. The protein is Protein SUPPRESSOR OF MAX2 1 of Arabidopsis thaliana (Mouse-ear cress).